Consider the following 499-residue polypeptide: MTQFIGSIDQGTTSSRFIIFDRQGDIVASDQREHEQIYPKAGWVEHNPIEIWRNTQHVIAAALKKAKLKASDIASVGITNQRETTLLWDRKTGAPLYNAIVWMDTRTDELVSRYTKDGGADQLRAKTGLPISTYFSGLKLRWILDNVPGAREKAEAGDALFGTIDTWLVWNLTGGTEGGIHITDVTNASRTQLMDLSTLQWDEDILRLFDIPSACLPEIRSSSEVYGEITLPSLSGVKLAGILGDQQAALFGQACLEPGEAKNTYGTGCFMLMNTGEKLVPSNYGLLTTVAYKLDGAKPVYALEGSIAITGALVQWLRDNLGIIRNSSDIETLARTVEDNGDVYFVPAFSGLFAPHWQDSARGIIAGLTRFANKGHIARAALEASAYQVREVLDAMVKDSGVEITELRADGGMTINELLMQFQSDILDVPVVRPKIIETTALGAAYAAGLAVGYWKSTKDIVENWQVGHRWHPRMSAEESTRLFNAWEKAVQRSLGWIE.

ADP is bound at residue Thr-12. Positions 12, 13, and 14 each coordinate ATP. A sn-glycerol 3-phosphate-binding site is contributed by Thr-12. Residue Arg-16 coordinates ADP. 4 residues coordinate sn-glycerol 3-phosphate: Arg-82, Glu-83, Tyr-134, and Asp-245. Residues Arg-82, Glu-83, Tyr-134, Asp-245, and Gln-246 each coordinate glycerol. Thr-267 and Gly-311 together coordinate ADP. ATP-binding residues include Thr-267, Gly-311, Gln-315, and Gly-412. Positions 412 and 416 each coordinate ADP.

Belongs to the FGGY kinase family.

The enzyme catalyses glycerol + ATP = sn-glycerol 3-phosphate + ADP + H(+). It participates in polyol metabolism; glycerol degradation via glycerol kinase pathway; sn-glycerol 3-phosphate from glycerol: step 1/1. Its activity is regulated as follows. Inhibited by fructose 1,6-bisphosphate (FBP). Functionally, key enzyme in the regulation of glycerol uptake and metabolism. Catalyzes the phosphorylation of glycerol to yield sn-glycerol 3-phosphate. This is Glycerol kinase from Brucella anthropi (strain ATCC 49188 / DSM 6882 / CCUG 24695 / JCM 21032 / LMG 3331 / NBRC 15819 / NCTC 12168 / Alc 37) (Ochrobactrum anthropi).